We begin with the raw amino-acid sequence, 875 residues long: Leucine--tRNA ligase (875 aa).

The 'HIGH' region motif lies at 43 to 53 (PYPSGRIHMGH). Positions 633 to 637 (KMSKS) match the 'KMSKS' region motif. Residue Lys-636 participates in ATP binding.

This sequence belongs to the class-I aminoacyl-tRNA synthetase family.

The protein resides in the cytoplasm. It catalyses the reaction tRNA(Leu) + L-leucine + ATP = L-leucyl-tRNA(Leu) + AMP + diphosphate. In Bartonella bacilliformis (strain ATCC 35685 / KC583 / Herrer 020/F12,63), this protein is Leucine--tRNA ligase.